The sequence spans 334 residues: Ketol-acid reductoisomerase (NADP(+)) (334 aa).

In terms of domain architecture, KARI N-terminal Rossmann spans 2-181; the sequence is TKVYYDQSVE…GATRAGVIET (180 aa). NADP(+)-binding positions include 25–28, Arg-48, Ser-52, and 82–85; these read YGSQ and DEIQ. Residue His-107 is part of the active site. Gly-133 provides a ligand contact to NADP(+). The 146-residue stretch at 182-327 folds into the KARI C-terminal knotted domain; it reads TFKEETETDL…RELRKMMPFI (146 aa). Residues Asp-190, Glu-194, Glu-226, and Glu-230 each coordinate Mg(2+). Ser-251 contributes to the substrate binding site.

Belongs to the ketol-acid reductoisomerase family. Requires Mg(2+) as cofactor.

The enzyme catalyses (2R)-2,3-dihydroxy-3-methylbutanoate + NADP(+) = (2S)-2-acetolactate + NADPH + H(+). The catalysed reaction is (2R,3R)-2,3-dihydroxy-3-methylpentanoate + NADP(+) = (S)-2-ethyl-2-hydroxy-3-oxobutanoate + NADPH + H(+). Its pathway is amino-acid biosynthesis; L-isoleucine biosynthesis; L-isoleucine from 2-oxobutanoate: step 2/4. It functions in the pathway amino-acid biosynthesis; L-valine biosynthesis; L-valine from pyruvate: step 2/4. Functionally, involved in the biosynthesis of branched-chain amino acids (BCAA). Catalyzes an alkyl-migration followed by a ketol-acid reduction of (S)-2-acetolactate (S2AL) to yield (R)-2,3-dihydroxy-isovalerate. In the isomerase reaction, S2AL is rearranged via a Mg-dependent methyl migration to produce 3-hydroxy-3-methyl-2-ketobutyrate (HMKB). In the reductase reaction, this 2-ketoacid undergoes a metal-dependent reduction by NADPH to yield (R)-2,3-dihydroxy-isovalerate. In Staphylococcus haemolyticus (strain JCSC1435), this protein is Ketol-acid reductoisomerase (NADP(+)).